An 865-amino-acid chain; its full sequence is MKYDFKNVEKFYQDRWDFSIGKNNEQGKCYVLEMFPYPSGKIHMGHLRNYVIGDVIARYKRACGFEVLHPIGWDAFGLPAENAARDNNVNPAAWTKENIDNMRAQLKSIGLSYNWERELSTCEADYYKHEQKFFLDFLKQGLVYRKKSWVNWDPIDQTVLANEQVVDGKGWRSGAIVEKRELSQWFLKITDFAEDLLECLQGLENWPEKVKMMQDRWIGKSEGVTIEFKIVGLNKKLKVFTTCPHTLFGASFCAVAIEHPIVQDLMSKEIQDLISSIKIQGKNNEKVGIYTGLNVKHPFLDKELPLYVANFVLMEYREGAIFGCPAHDQRDFEFAQEYDLPIIPVISSARLGIIPACDQGSYTGSQCQATRMADGLNEEYTNNSIMFNSEFLNGLTVSEARKVIVEKLEEKGIGKKTINYRLHDWGVSRQRYWGCPIPVIYCKNCGTVPVPEEDLPVTLPTDVDFTSGGNPLDKHPTWKFVNCPKCKEQAERETDTFDTFFESSWYFAAFCSENKSIDKNACNRFMPVDYYIGGIEHAILHLLYSRFFCRALTKCGYFNVKEPFSTLITQGMVCHVTYKDKNGKWLFPEEAKRLITQGAKIQVGKVEKMSKSKKNTVDPNFIIEKYGADTARLFVLSDTPPEKDMEWSNDGVEGCSRYINKLWRMVMQFKPVVILNQSPVKQVADTEIQKEDMLSHAGMIPDKNVTGKFLGYRKKIHKLLHGLTDDLENCRLNCVVAKFREMTNLIAEIDVKTGKSLINEGICILIRVVEPFIPHLAESLWREIGGEGMLYLQPWPKAAKSLLIDDVVTVAVQINGKLRATIEVAINLHQEELKQIAINSVSNRVDQSKVRAVYAVSNKIVNIVT.

The 'HIGH' region motif lies at 36–46 (PYPSGKIHMGH). The 'KMSKS' region motif lies at 608 to 612 (KMSKS). K611 is a binding site for ATP.

This sequence belongs to the class-I aminoacyl-tRNA synthetase family.

It is found in the cytoplasm. It carries out the reaction tRNA(Leu) + L-leucine + ATP = L-leucyl-tRNA(Leu) + AMP + diphosphate. This chain is Leucine--tRNA ligase, found in Wolbachia sp. subsp. Brugia malayi (strain TRS).